Here is a 277-residue protein sequence, read N- to C-terminus: Probable endonuclease 4 (277 aa).

His67, His107, Glu141, Asp173, His176, His210, Asp223, His225, and Glu255 together coordinate Zn(2+).

It belongs to the AP endonuclease 2 family. Zn(2+) is required as a cofactor.

The enzyme catalyses Endonucleolytic cleavage to 5'-phosphooligonucleotide end-products.. Its function is as follows. Endonuclease IV plays a role in DNA repair. It cleaves phosphodiester bonds at apurinic or apyrimidinic (AP) sites, generating a 3'-hydroxyl group and a 5'-terminal sugar phosphate. The protein is Probable endonuclease 4 of Haloarcula marismortui (strain ATCC 43049 / DSM 3752 / JCM 8966 / VKM B-1809) (Halobacterium marismortui).